The chain runs to 973 residues: 109 kDa U5 small nuclear ribonucleoprotein component GFL (973 aa).

The segment at 1-40 is disordered; sequence MDGSLYGECGNYIGPEIESDRDSDDSVEDEDLQEPGGSNG. Over residues 17–33 the composition is skewed to acidic residues; that stretch reads IESDRDSDDSVEDEDLQ. The 287-residue stretch at 122–408 folds into the tr-type G domain; sequence ALVRNVALVG…LGVTLSNSAY (287 aa). The interval 131–138 is G1; it reads GHLQHGKT. 131 to 138 is a GTP binding site; the sequence is GHLQHGKT. Residues 175-179 form a G2 region; it reads NISIK. A G3 region spans residues 201-204; sequence DTPG. Residues 201 to 205 and 255 to 258 contribute to the GTP site; these read DTPGN and NKVD. The tract at residues 255–258 is G4; that stretch reads NKVD. The G5 stretch occupies residues 381–383; the sequence is YSQ.

The protein belongs to the TRAFAC class translation factor GTPase superfamily. Classic translation factor GTPase family. In terms of tissue distribution, expressed in flower buds, open flowers and siliques. Expressed at low levels in rosettes leaves, cauline leaves and stems.

Its subcellular location is the nucleus speckle. Its function is as follows. Splicing factor involved in pre-mRNA splicing and component of the spliceosome. In Arabidopsis thaliana (Mouse-ear cress), this protein is 109 kDa U5 small nuclear ribonucleoprotein component GFL.